The primary structure comprises 578 residues: Isocitrate dehydrogenase kinase/phosphatase (578 aa).

Residues 315–321 and Lys-336 contribute to the ATP site; that span reads APGIRGM. Asp-371 is an active-site residue.

It belongs to the AceK family.

It is found in the cytoplasm. It carries out the reaction L-seryl-[isocitrate dehydrogenase] + ATP = O-phospho-L-seryl-[isocitrate dehydrogenase] + ADP + H(+). Bifunctional enzyme which can phosphorylate or dephosphorylate isocitrate dehydrogenase (IDH) on a specific serine residue. This is a regulatory mechanism which enables bacteria to bypass the Krebs cycle via the glyoxylate shunt in response to the source of carbon. When bacteria are grown on glucose, IDH is fully active and unphosphorylated, but when grown on acetate or ethanol, the activity of IDH declines drastically concomitant with its phosphorylation. The polypeptide is Isocitrate dehydrogenase kinase/phosphatase (Escherichia coli O139:H28 (strain E24377A / ETEC)).